Reading from the N-terminus, the 404-residue chain is Probable tRNA sulfurtransferase (404 aa).

The 106-residue stretch at 60 to 165 folds into the THUMP domain; it reads QPIVEALKLV…DEAAYISYEE (106 aa). ATP contacts are provided by residues 183–184, 208–209, Arg265, Gly287, and Gln296; these read ML and HF.

Belongs to the ThiI family.

The protein resides in the cytoplasm. It catalyses the reaction [ThiI sulfur-carrier protein]-S-sulfanyl-L-cysteine + a uridine in tRNA + 2 reduced [2Fe-2S]-[ferredoxin] + ATP + H(+) = [ThiI sulfur-carrier protein]-L-cysteine + a 4-thiouridine in tRNA + 2 oxidized [2Fe-2S]-[ferredoxin] + AMP + diphosphate. It carries out the reaction [ThiS sulfur-carrier protein]-C-terminal Gly-Gly-AMP + S-sulfanyl-L-cysteinyl-[cysteine desulfurase] + AH2 = [ThiS sulfur-carrier protein]-C-terminal-Gly-aminoethanethioate + L-cysteinyl-[cysteine desulfurase] + A + AMP + 2 H(+). It functions in the pathway cofactor biosynthesis; thiamine diphosphate biosynthesis. Catalyzes the ATP-dependent transfer of a sulfur to tRNA to produce 4-thiouridine in position 8 of tRNAs, which functions as a near-UV photosensor. Also catalyzes the transfer of sulfur to the sulfur carrier protein ThiS, forming ThiS-thiocarboxylate. This is a step in the synthesis of thiazole, in the thiamine biosynthesis pathway. The sulfur is donated as persulfide by IscS. In Streptococcus pyogenes serotype M4 (strain MGAS10750), this protein is Probable tRNA sulfurtransferase.